Reading from the N-terminus, the 884-residue chain is MSTRRVYFFGETPENQPANSELCRKVLGGKGISLAAMIKLGMPVPLGFTITCQTCVEYQKTASWPKGLKEEVASNLKLLEEKMGKTFGDNTNPLLVSVRSGAAVSMPGMMDTILNLGLNDESVKGLAAVTGNARFAYDSYRRFMQMFGDVCLGIDHDKFEHALDAVKTRYGRKTDPELTADELEEVCEAYRKICVAATGKTFPQCPHEQLELAINAVFKSWTNPRAQAYRTLNKLDHNMGTAVNVQSMVFGNTGDDSGTGVGFTRCPKTGEKFSYLYGEFLQNAQGEDVVAGIRTPVNLKEMPTINASWKACYDELSLIYAKLEGYYNDMVDLEFTVENGKLWMLQARAGKRTGFAMVRIAIDMCKEGMLTEEEALLRIDANKINEFLFKRFDPSVKPVVLGKGIPASPGAAVGVICFCPMRTCELAEQGKKVILTRIETSPEDILGMDRAVGILTARGGQTSHAAVVARGMGKCCVAGADCCQINYATKTLVIGDRKFKEGDFISINGTTGEIYNGAVQTIEPGITDDLQTIMDWSDKYRVLKIRTNADTPHDAAVARKFGAEGIGLCRTEHMFFAADRIMAMREMILSDDEGARRTALNKLLPFQREDFIGIFKAMDGKGVNIRLLDPPLHEFLPHTRDLQKKLAEDMNKKHRHIHERVEDLHEVNPMLGFRGVRLGIVYPEISEMQVRAILEAACIVSREGVTVKPEIMIPVLFSENEMEIMHALVNRVAASVFKEHGTTVDYEVGTMIELPRACVMADKIAQTAQYFSFGTNDLTQTTFGISRDDAGKFIPKYIDRGIFKVDPFVTLDQQGVGALMKMAIEGGRSTRTDMKIGICGEQTDPASILFLHKIGLNYVSCSPYRVPVARVAAAIAAIKARTNQ.

Residues 1–351 (MSTRRVYFFG…LWMLQARAGK (351 aa)) form an N-terminal region. Arg99 contacts ATP. A linker 1 region spans residues 352 to 408 (RTGFAMVRIAIDMCKEGMLTEEEALLRIDANKINEFLFKRFDPSVKPVVLGKGIPAS). Positions 409–507 (PGAAVGVICF…KFKEGDFISI (99 aa)) are central. Residue Thr462 is modified to Phosphothreonine; by PDRP1. His464 acts as the Tele-phosphohistidine intermediate in catalysis. The linker 2 stretch occupies residues 508–542 (NGTTGEIYNGAVQTIEPGITDDLQTIMDWSDKYRV). The tract at residues 543-884 (LKIRTNADTP…IAAIKARTNQ (342 aa)) is C-terminal. Substrate contacts are provided by Arg570, Arg626, Glu753, Gly774, Thr775, Asn776, and Asp777. Glu753 is a Mg(2+) binding site. Residue Asp777 participates in Mg(2+) binding. Cys839 functions as the Proton donor in the catalytic mechanism.

The protein belongs to the PEP-utilizing enzyme family. Homodimer. It depends on Mg(2+) as a cofactor. Post-translationally, phosphorylation of Thr-462 in the dark inactivates the enzyme. Dephosphorylation upon light stimulation reactivates the enzyme.

The enzyme catalyses pyruvate + phosphate + ATP = phosphoenolpyruvate + AMP + diphosphate + H(+). Activated by light-induced dephosphorylation. Inhibited by dark-induced phosphorylation. Both reactions are catalyzed by PDRP1. Its function is as follows. Catalyzes the reversible phosphorylation of pyruvate and phosphate. The protein is Pyruvate, phosphate dikinase of Giardia intestinalis (Giardia lamblia).